The following is a 286-amino-acid chain: Non-homologous end joining protein Ku (286 aa).

One can recognise a Ku domain in the interval 10–175 (TVGLVSFPVR…EEVREPDFVV (166 aa)). The segment covering 226-242 (ERQERQRREAGEVRQAD) has biased composition (basic and acidic residues). The interval 226–270 (ERQERQRREAGEVRQADETDEAAETEVPEVDIPASRAPGETGGEL) is disordered. Over residues 243–254 (ETDEAAETEVPE) the composition is skewed to acidic residues.

This sequence belongs to the prokaryotic Ku family. As to quaternary structure, homodimer. Interacts with LigD.

In terms of biological role, with LigD forms a non-homologous end joining (NHEJ) DNA repair enzyme, which repairs dsDNA breaks with reduced fidelity. Binds linear dsDNA with 5'- and 3'- overhangs but not closed circular dsDNA nor ssDNA. Recruits and stimulates the ligase activity of LigD. The polypeptide is Non-homologous end joining protein Ku (Actinosynnema mirum (strain ATCC 29888 / DSM 43827 / JCM 3225 / NBRC 14064 / NCIMB 13271 / NRRL B-12336 / IMRU 3971 / 101)).